A 920-amino-acid polypeptide reads, in one-letter code: Isoleucine--tRNA ligase (920 aa).

A 'HIGH' region motif is present at residues 58-68 (PYANGHLHLGH). E569 contacts L-isoleucyl-5'-AMP. The 'KMSKS' region signature appears at 610-614 (KMSKS). Position 613 (K613) interacts with ATP. Positions 895, 898, 910, and 913 each coordinate Zn(2+).

The protein belongs to the class-I aminoacyl-tRNA synthetase family. IleS type 1 subfamily. In terms of assembly, monomer. Requires Zn(2+) as cofactor.

The protein resides in the cytoplasm. It carries out the reaction tRNA(Ile) + L-isoleucine + ATP = L-isoleucyl-tRNA(Ile) + AMP + diphosphate. Catalyzes the attachment of isoleucine to tRNA(Ile). As IleRS can inadvertently accommodate and process structurally similar amino acids such as valine, to avoid such errors it has two additional distinct tRNA(Ile)-dependent editing activities. One activity is designated as 'pretransfer' editing and involves the hydrolysis of activated Val-AMP. The other activity is designated 'posttransfer' editing and involves deacylation of mischarged Val-tRNA(Ile). In Helicobacter pylori (strain Shi470), this protein is Isoleucine--tRNA ligase.